Reading from the N-terminus, the 508-residue chain is MDHPHPSTFSLGLSQILVCLALLYAAIHILSVYRRLCHISGPFWARISNLPRVWWVNTSRAHEIHQQLHEKYGDVVRFGPNMVSLRNPTWIPTVYPTRMGVKKSDFYRTLAPYTPSGALPAVFSSRDEEVHRGLRGPIASLYSMSKVLPLEVFVDRTIDVLVRQLDGRFAGAGETFDLASWLQFFAFDVMGTLTFSKRYGFLEKGMDVHGMLDTIWRFLKGAAPFTQIPWVDEIWNKNVLATKLKGATGVSILGIVGKFVSQRQEESKAGKIDGTADRDMLSLFMEIQKNNQLPPWYVTAWTFSNITAGSDSAAVVMRTVFYNLLSHPSTLQKLRSELLSAGPLTQPYPSWKDVCNLPYLDACILEALRLHPPFCLPFERIVPQGGMVLGDTYFPEGTVVGMSPWVVNRHKPTFGEDSDVWNPERWMVSKELKSKREAAVLTFGAGRRVCLGRHIAILELKKIVPALVLRYDFELIDPERFTTENFWFFRQRGMDVRVKKRMQAEAGI.

The helical transmembrane segment at 9–29 (FSLGLSQILVCLALLYAAIHI) threads the bilayer. Asn-57 and Asn-305 each carry an N-linked (GlcNAc...) asparagine glycan. Residue Cys-450 coordinates heme.

Belongs to the cytochrome P450 family. The cofactor is heme.

The protein resides in the membrane. It functions in the pathway secondary metabolite biosynthesis. In terms of biological role, cytochrome P450 monooxygenase; part of the gene cluster that mediates the biosynthesis of aspernidine A, a prenylated isoindolinone. The starting point of the biosynthesis of aspernidin A is the production of orsellinaldehyde by the non-reducing polyketide synthase pkfA. Hydroxylation, methylation of one of the phenol groups, and prenylation, presumably catalyzed by the prenyltransferase pkfE, would be needed to yield aspernidine D. Subsequently, the cytochrome P450 monooxygenase pkfB is responsible for hydroxylation of aspernidine D to yield aspernidine E. The dehydrogenase pkfF may be responsible for further oxidation of aspernidine E to form a dialdehyde intermediate which is further transformed in a series of steps, some of which are enzyme-mediated, to generate aspernidine A. The possibility that additional enzymes outside of the cluster are involved in aspernidine A biosynthesis cannot be excluded. This Emericella nidulans (strain FGSC A4 / ATCC 38163 / CBS 112.46 / NRRL 194 / M139) (Aspergillus nidulans) protein is Cytochrome P450 monooxygenase pkfB.